The sequence spans 216 residues: Protein ADP-ribose pyrophosphatase ORF38 (216 aa).

A Nudix hydrolase domain is found at 1 to 177; it reads MRNAAGLFMI…DYSNYIEFFD (177 aa). Positions 48 to 70 match the Nudix box motif; sequence GHRDCCDAKVYETAVREFVEETG.

It is found in the host cytoplasm. The protein resides in the host nucleus. It carries out the reaction ADP-D-ribose + H2O = D-ribose 5-phosphate + AMP + 2 H(+). Plays an important role in virus replication most probably through its hydrolyzing ADP-ribose activity in host cells. May function in viral DNA replication or transcription directly, or by removing toxic substances or metabolic intermediates. The sequence is that of Protein ADP-ribose pyrophosphatase ORF38 from Lepidoptera (butterflies and moths).